Consider the following 237-residue polypeptide: Protein PetR (237 aa).

The 114-residue stretch at 8–121 (HLLIVDDDER…ELLLRINAIL (114 aa)) folds into the Response regulatory domain. Aspartate 57 carries the 4-aspartylphosphate modification. A DNA-binding region (H-T-H motif) is located at residues 77-95 (ATPILLLTARGETRERIEG). A DNA-binding region (ompR/PhoB-type) is located at residues 132–236 (PKYLSLGPLR…VRGLGYMLAP (105 aa)).

In terms of biological role, necessary for photosynthetic and respiratory growth. Probable promoter-specific protein mediating the interaction between DNA and RNA polymerase. In Rhodobacter capsulatus (strain ATCC BAA-309 / NBRC 16581 / SB1003), this protein is Protein PetR (petR).